The chain runs to 501 residues: 2-isopropylmalate synthase (501 aa).

The Pyruvate carboxyltransferase domain occupies 7 to 269; the sequence is VRIFDTTLRD…QTQIKTEEIA (263 aa). 4 residues coordinate Mn(2+): Asp-16, His-204, His-206, and Asn-240. Residues 394–501 are regulatory domain; it reads QLEGFTVSTG…RAYISALNRL (108 aa).

It belongs to the alpha-IPM synthase/homocitrate synthase family. LeuA type 1 subfamily. Homodimer. It depends on Mn(2+) as a cofactor.

Its subcellular location is the cytoplasm. The enzyme catalyses 3-methyl-2-oxobutanoate + acetyl-CoA + H2O = (2S)-2-isopropylmalate + CoA + H(+). The protein operates within amino-acid biosynthesis; L-leucine biosynthesis; L-leucine from 3-methyl-2-oxobutanoate: step 1/4. Its function is as follows. Catalyzes the condensation of the acetyl group of acetyl-CoA with 3-methyl-2-oxobutanoate (2-ketoisovalerate) to form 3-carboxy-3-hydroxy-4-methylpentanoate (2-isopropylmalate). The sequence is that of 2-isopropylmalate synthase from Leptospira interrogans serogroup Icterohaemorrhagiae serovar copenhageni (strain Fiocruz L1-130).